Here is a 211-residue protein sequence, read N- to C-terminus: MFIKICGIKTPEELRIVENYGNATGVILECASKRRIGFETAKNLVNLANIPVFAVSTASDVSVWENIIEFTGTNYLQMHSDIDQKAIDFIKNEYGCFIMKSFKIPETSTSPEIDAEKIISEIESYEVDRILLDTGKGCGQTHDHRVSQIIAKKFDIVLAGGLDPDNVLNIVKYVKPFGIDVSSGVENNNSKDEELIKRFCENVKLGENYEM.

This sequence belongs to the TrpF family.

The enzyme catalyses N-(5-phospho-beta-D-ribosyl)anthranilate = 1-(2-carboxyphenylamino)-1-deoxy-D-ribulose 5-phosphate. Its pathway is amino-acid biosynthesis; L-tryptophan biosynthesis; L-tryptophan from chorismate: step 3/5. The sequence is that of N-(5'-phosphoribosyl)anthranilate isomerase from Methanococcus maripaludis (strain DSM 14266 / JCM 13030 / NBRC 101832 / S2 / LL).